We begin with the raw amino-acid sequence, 200 residues long: Small ribosomal subunit protein uS4 (200 aa).

Positions 92-155 constitute an S4 RNA-binding domain; it reads SRLDAVVYSL…QNLDIIKESV (64 aa).

Belongs to the universal ribosomal protein uS4 family. In terms of assembly, part of the 30S ribosomal subunit. Contacts protein S5. The interaction surface between S4 and S5 is involved in control of translational fidelity.

Functionally, one of the primary rRNA binding proteins, it binds directly to 16S rRNA where it nucleates assembly of the body of the 30S subunit. With S5 and S12 plays an important role in translational accuracy. This Staphylococcus epidermidis (strain ATCC 35984 / DSM 28319 / BCRC 17069 / CCUG 31568 / BM 3577 / RP62A) protein is Small ribosomal subunit protein uS4.